Here is a 487-residue protein sequence, read N- to C-terminus: Sodium-coupled neutral amino acid symporter 1 (487 aa).

Residues methionine 1 to glycine 74 are Cytoplasmic-facing. Serine 6 bears the Phosphoserine mark. The residue at position 11 (threonine 11) is a Phosphothreonine. Phosphoserine is present on residues serine 25, serine 28, serine 49, and serine 52. A Phosphothreonine modification is found at threonine 54. The residue at position 56 (serine 56) is a Phosphoserine. A helical membrane pass occupies residues methionine 75–alanine 97. The Extracellular segment spans residues asparagine 98 to threonine 112. The chain crosses the membrane as a helical span at residues leucine 113 to valine 133. Topologically, residues tyrosine 134–lysine 147 are cytoplasmic. The chain crosses the membrane as a helical span at residues phenylalanine 148–isoleucine 168. The Extracellular segment spans residues valine 169–serine 188. A helical transmembrane segment spans residues alanine 189–leucine 211. The Cytoplasmic segment spans residues leucine 212 to glycine 216. Residues tyrosine 217–isoleucine 237 traverse the membrane as a helical segment. Over tyrosine 238 to threonine 275 the chain is Extracellular. Cysteine 245 and cysteine 264 form a disulfide bridge. Residues asparagine 251 and asparagine 257 are each glycosylated (N-linked (GlcNAc...) asparagine). The helical transmembrane segment at valine 276 to tyrosine 296 threads the bilayer. Residues serine 297 to asparagine 312 are Cytoplasmic-facing. Residues isoleucine 313–phenylalanine 333 traverse the membrane as a helical segment. Over tyrosine 334 to aspartate 350 the chain is Extracellular. Residues isoleucine 351–leucine 371 form a helical membrane-spanning segment. At phenylalanine 372–histidine 393 the chain is on the cytoplasmic side. Residues threonine 394 to methionine 414 form a helical membrane-spanning segment. Residues lysine 415–aspartate 416 lie on the Extracellular side of the membrane. A helical transmembrane segment spans residues isoleucine 417–leucine 437. Over tyrosine 438–arginine 452 the chain is Cytoplasmic. A helical transmembrane segment spans residues isoleucine 453–valine 473. Topologically, residues isoleucine 474 to histidine 487 are extracellular.

It belongs to the amino acid/polyamine transporter 2 family. In terms of processing, N-glycosylation plays an important role in the L-glutamine transport.

The protein localises to the cell membrane. The catalysed reaction is L-glutamine(in) + Na(+)(in) = L-glutamine(out) + Na(+)(out). The enzyme catalyses L-alanine(in) + Na(+)(in) = L-alanine(out) + Na(+)(out). It carries out the reaction L-asparagine(in) + Na(+)(in) = L-asparagine(out) + Na(+)(out). It catalyses the reaction L-histidine(in) + Na(+)(in) = L-histidine(out) + Na(+)(out). The catalysed reaction is L-serine(in) + Na(+)(in) = L-serine(out) + Na(+)(out). The enzyme catalyses L-cysteine(in) + Na(+)(in) = L-cysteine(out) + Na(+)(out). It carries out the reaction L-methionine(in) + Na(+)(in) = L-methionine(out) + Na(+)(out). It catalyses the reaction glycine(in) + Na(+)(in) = glycine(out) + Na(+)(out). The catalysed reaction is L-threonine(in) + Na(+)(in) = L-threonine(out) + Na(+)(out). The enzyme catalyses L-proline(in) + Na(+)(in) = L-proline(out) + Na(+)(out). Its activity is regulated as follows. Inhibited by alpha-(methylamino)isobutyric acid (MeAIB). Inhibited by lithium, potassium, choline ions, N-methylglucamine. The pH dependence has an allosteric effect on the transport. Its function is as follows. Symporter that cotransports short-chain neutral amino acids and sodium ions from the extraccellular to the intracellular side of the cell membrane. The transport is elctrogenic, pH dependent and driven by the Na(+) electrochemical gradient. Participates in the astroglia-derived glutamine transport into GABAergic interneurons for neurotransmitter GABA de novo synthesis. May also contributes to amino acid transport in placental trophoblast. Regulates synaptic plasticity. This Pongo abelii (Sumatran orangutan) protein is Sodium-coupled neutral amino acid symporter 1.